We begin with the raw amino-acid sequence, 227 residues long: Protein FdhD (227 aa).

Mo-bis(molybdopterin guanine dinucleotide) is bound at residue 210–215 (FARNGK).

It belongs to the FdhD family.

It is found in the cytoplasm. Its function is as follows. Required for formate dehydrogenase (FDH) activity. In Methanocaldococcus jannaschii (strain ATCC 43067 / DSM 2661 / JAL-1 / JCM 10045 / NBRC 100440) (Methanococcus jannaschii), this protein is Protein FdhD.